The following is a 125-amino-acid chain: MIQIDFNKMGGLIPAIIQDYQNGEVLMVAFMDEKTLNLTLETGKTWFFSRSRNKYWMKGEESGNTQEVMEVLTDCDADTVVIKVKQNGPAACHTGNRSCFYVKWENGQWVEHSKPLFDPAQVYKK.

Residue Asp74 coordinates Mg(2+). Residue Cys75 participates in Zn(2+) binding. 2 residues coordinate Mg(2+): Asp76 and Asp78. Zn(2+) contacts are provided by Cys92 and Cys99.

It belongs to the PRA-CH family. As to quaternary structure, homodimer. The cofactor is Mg(2+). Zn(2+) serves as cofactor.

The protein resides in the cytoplasm. The catalysed reaction is 1-(5-phospho-beta-D-ribosyl)-5'-AMP + H2O = 1-(5-phospho-beta-D-ribosyl)-5-[(5-phospho-beta-D-ribosylamino)methylideneamino]imidazole-4-carboxamide. It functions in the pathway amino-acid biosynthesis; L-histidine biosynthesis; L-histidine from 5-phospho-alpha-D-ribose 1-diphosphate: step 3/9. Its function is as follows. Catalyzes the hydrolysis of the adenine ring of phosphoribosyl-AMP. The protein is Phosphoribosyl-AMP cyclohydrolase of Pelobacter propionicus (strain DSM 2379 / NBRC 103807 / OttBd1).